A 54-amino-acid polypeptide reads, in one-letter code: Glutathione S-transferase 6.7 (54 aa).

Belongs to the GST superfamily. Theta family. As to quaternary structure, homodimer. Post-translationally, the N-terminus is blocked.

It localises to the cytoplasm. The enzyme catalyses RX + glutathione = an S-substituted glutathione + a halide anion + H(+). Its function is as follows. Conjugation of reduced glutathione to a wide number of exogenous and endogenous hydrophobic electrophiles. This is Glutathione S-transferase 6.7 from Dicentrarchus labrax (European seabass).